The chain runs to 46 residues: uncharacterized protein (46 aa).

The interval 1-46 (MNFGIKPDVSSGPRKGGPFKELSDFSKTSPTPQQPRSLSGKSVMLP) is disordered. A compositionally biased stretch (polar residues) spans 25–40 (FSKTSPTPQQPRSLSG).

This is an uncharacterized protein from Dictyostelium discoideum (Social amoeba).